A 1887-amino-acid polypeptide reads, in one-letter code: ATP-dependent DNA helicase tlh1 (1887 aa).

A compositionally biased stretch (basic and acidic residues) spans 329–347 (NQQRREQQDKGENKKRQDD). Disordered regions lie at residues 329-372 (NQQR…EEEE), 504-552 (ERKE…NTDD), and 1110-1135 (MVEGDKEKDKTNEEKNKDEVKAEMTQ). Acidic residues-rich tracts occupy residues 360 to 372 (LEDDEKDNDEEEE) and 524 to 533 (SAEDDNDNDN). Positions 540-549 (NNNNNNNNTN) are enriched in low complexity. A compositionally biased stretch (basic and acidic residues) spans 1112–1131 (EGDKEKDKTNEEKNKDEVKA). The Helicase ATP-binding domain occupies 1200-1375 (YFSLLNRMNL…RQTFCTNFYV (176 aa)). Residues 1213-1220 (LPTGGGKS) and 1240-1247 (MNMVTLVL) each bind ATP. Positions 1322–1325 (DEAH) match the DEAH box motif. The Helicase C-terminal domain occupies 1401 to 1559 (DLRTLMKRTK…CVRSFLASEM (159 aa)). Residues 1613–1643 (YNASFSSSPPPQPGNSSGMSAMNTNTTSTTP) form a disordered region. The span at 1626–1642 (GNSSGMSAMNTNTTSTT) shows a compositional bias: low complexity. The CCHC-type zinc-finger motif lies at 1804–1821 (STCYKCGKADHNLRECKL).

The protein belongs to the helicase family. RecQ subfamily.

It carries out the reaction Couples ATP hydrolysis with the unwinding of duplex DNA by translocating in the 3'-5' direction.. It catalyses the reaction ATP + H2O = ADP + phosphate + H(+). In terms of biological role, a probable ATP-dependent 3'-5' DNA helicase. Has a role in telomerase-independent telomere maintenance. This Schizosaccharomyces pombe (strain 972 / ATCC 24843) (Fission yeast) protein is ATP-dependent DNA helicase tlh1.